The chain runs to 701 residues: Ribosomal RNA large subunit methyltransferase K/L (701 aa).

Positions 43–155 constitute a THUMP domain; it reads LLYKSLMWSR…NNILHIMLDL (113 aa).

The protein belongs to the methyltransferase superfamily. RlmKL family.

Its subcellular location is the cytoplasm. It carries out the reaction guanosine(2445) in 23S rRNA + S-adenosyl-L-methionine = N(2)-methylguanosine(2445) in 23S rRNA + S-adenosyl-L-homocysteine + H(+). The enzyme catalyses guanosine(2069) in 23S rRNA + S-adenosyl-L-methionine = N(2)-methylguanosine(2069) in 23S rRNA + S-adenosyl-L-homocysteine + H(+). Its function is as follows. Specifically methylates the guanine in position 2445 (m2G2445) and the guanine in position 2069 (m7G2069) of 23S rRNA. This Buchnera aphidicola subsp. Acyrthosiphon pisum (strain APS) (Acyrthosiphon pisum symbiotic bacterium) protein is Ribosomal RNA large subunit methyltransferase K/L.